A 382-amino-acid chain; its full sequence is 1-deoxy-D-xylulose 5-phosphate reductoisomerase (382 aa).

6 residues coordinate NADPH: threonine 10, glycine 11, serine 12, isoleucine 13, glycine 36, and asparagine 122. Position 123 (lysine 123) interacts with 1-deoxy-D-xylulose 5-phosphate. Glutamate 124 lines the NADPH pocket. Residue aspartate 148 coordinates Mn(2+). Positions 149, 150, 174, and 197 each coordinate 1-deoxy-D-xylulose 5-phosphate. Glutamate 150 contributes to the Mn(2+) binding site. Glycine 203 lines the NADPH pocket. 1-deoxy-D-xylulose 5-phosphate contacts are provided by serine 210, asparagine 215, lysine 216, and glutamate 219. Residue glutamate 219 coordinates Mn(2+).

Belongs to the DXR family. The cofactor is Mg(2+). Mn(2+) is required as a cofactor.

It catalyses the reaction 2-C-methyl-D-erythritol 4-phosphate + NADP(+) = 1-deoxy-D-xylulose 5-phosphate + NADPH + H(+). The protein operates within isoprenoid biosynthesis; isopentenyl diphosphate biosynthesis via DXP pathway; isopentenyl diphosphate from 1-deoxy-D-xylulose 5-phosphate: step 1/6. Catalyzes the NADPH-dependent rearrangement and reduction of 1-deoxy-D-xylulose-5-phosphate (DXP) to 2-C-methyl-D-erythritol 4-phosphate (MEP). This chain is 1-deoxy-D-xylulose 5-phosphate reductoisomerase, found in Chlorobium limicola (strain DSM 245 / NBRC 103803 / 6330).